The following is a 222-amino-acid chain: Thiopurine S-methyltransferase (222 aa).

Positions 10, 45, 66, and 123 each coordinate S-adenosyl-L-methionine.

This sequence belongs to the class I-like SAM-binding methyltransferase superfamily. TPMT family.

It localises to the cytoplasm. It carries out the reaction S-adenosyl-L-methionine + a thiopurine = S-adenosyl-L-homocysteine + a thiopurine S-methylether.. This Pseudomonas fluorescens (strain ATCC BAA-477 / NRRL B-23932 / Pf-5) protein is Thiopurine S-methyltransferase.